A 179-amino-acid polypeptide reads, in one-letter code: Probable splicing factor, arginine/serine-rich 6 (179 aa).

In terms of domain architecture, RRM spans 3–76 (AKVYVGGLPS…VRARVELSTG (74 aa)). The tract at residues 75 to 179 (TGQRRGGGGR…RSRSRSASPH (105 aa)) is disordered. A compositionally biased stretch (gly residues) spans 78–93 (RRGGGGRGGGFGGRGG). The segment covering 94 to 160 (GGRDRSPYRG…RSPQERDRSH (67 aa)) has biased composition (basic and acidic residues). Over residues 161 to 173 (SKSRSRSRSRSRS) the composition is skewed to basic residues.

This sequence belongs to the splicing factor SR family. In terms of processing, extensively phosphorylated on serine residues in the RS domain.

The protein localises to the nucleus. Its function is as follows. Plays a functionally redundant role in shifting germ cell sexual differentiation in hermaprodites. Required for the development of somatic gonad structures and for progression from larval stage to adulthood. This chain is Probable splicing factor, arginine/serine-rich 6 (rsp-6), found in Caenorhabditis elegans.